A 131-amino-acid polypeptide reads, in one-letter code: Fumarate reductase subunit C (131 aa).

The next 3 membrane-spanning stretches (helical) occupy residues 30-50 (EGTA…LFAL), 61-81 (IGFL…AAAL), and 110-130 (IKGL…VALF).

The protein belongs to the FrdC family. In terms of assembly, part of an enzyme complex containing four subunits: a flavoprotein (FrdA), an iron-sulfur protein (FrdB), and two hydrophobic anchor proteins (FrdC and FrdD).

It is found in the cell inner membrane. Two distinct, membrane-bound, FAD-containing enzymes are responsible for the catalysis of fumarate and succinate interconversion; fumarate reductase is used in anaerobic growth, and succinate dehydrogenase is used in aerobic growth. Anchors the catalytic components of the fumarate reductase complex to the cell inner membrane, binds quinones. The chain is Fumarate reductase subunit C from Klebsiella pneumoniae (strain 342).